Reading from the N-terminus, the 250-residue chain is Gamma-secretase subunit APH1-like (250 aa).

Transmembrane regions (helical) follow at residues 5–25 (AGIG…VSVI), 29–49 (PFLI…LIIL), 57–77 (LPLK…SVCF), 116–136 (IALA…CLSL), 157–177 (FLIS…SMVI), 191–211 (IIVP…FASE), and 212–232 (GCVI…VHCG).

This sequence belongs to the APH-1 family. As to quaternary structure, probable component of the gamma-secretase complex, a complex composed of a presenilin homodimer, nicastrin, APH1 and PEN2.

The protein localises to the membrane. Probable subunit of the gamma-secretase complex, an endoprotease complex that catalyzes the intramembrane cleavage of integral proteins such as Notch receptors. The polypeptide is Gamma-secretase subunit APH1-like (Arabidopsis thaliana (Mouse-ear cress)).